The sequence spans 997 residues: Bifunctional purine synthesis protein purC/E (997 aa).

Residues 1 to 305 (MTTAINNNIV…NNNNNNNNNS (305 aa)) form an SAICAR synthetase region. 3 stretches are compositionally biased toward low complexity: residues 294–323 (LNNNNNNNNNNSNNNNNNTSSTSRSNSLPN), 342–355 (QQQSGVGNNNNVNS), and 524–536 (TSTSTTTTTTTTS). Disordered stretches follow at residues 294–355 (LNNN…NVNS), 518–538 (IPVDNPTSTSTTTTTTTTSNA), 550–569 (INSNTSSHNNNQQQQQQQQT), and 575–604 (PTIINTPTPVRSSVSRSQSPLPSGNGSSII). The AIR carboxylase stretch occupies residues 305-997 (SNNNNNNTSS…GRKMGHVTQQ (693 aa)). Residues 575-597 (PTIINTPTPVRSSVSRSQSPLPS) are compositionally biased toward low complexity. Residues arginine 728, lysine 768, glutamine 779, 807 to 810 (EQYI), and glutamate 815 contribute to the ATP site. Residues 732-927 (KTFIQSLDIP…QFEQLIRCVC (196 aa)) form the ATP-grasp domain. The Mg(2+) site is built by glutamate 880 and glutamate 898. Residue 897-898 (NE) participates in ATP binding.

The protein in the N-terminal section; belongs to the SAICAR synthetase family. This sequence in the C-terminal section; belongs to the AIR carboxylase family. Class I subfamily. Mg(2+) is required as a cofactor. Requires Mn(2+) as cofactor.

The enzyme catalyses 5-amino-1-(5-phospho-D-ribosyl)imidazole-4-carboxylate + L-aspartate + ATP = (2S)-2-[5-amino-1-(5-phospho-beta-D-ribosyl)imidazole-4-carboxamido]succinate + ADP + phosphate + 2 H(+). It catalyses the reaction 5-amino-1-(5-phospho-D-ribosyl)imidazole-4-carboxylate + H(+) = 5-amino-1-(5-phospho-beta-D-ribosyl)imidazole + CO2. It participates in purine metabolism; IMP biosynthesis via de novo pathway; 5-amino-1-(5-phospho-D-ribosyl)imidazole-4-carboxylate from 5-amino-1-(5-phospho-D-ribosyl)imidazole (carboxylase route): step 1/1. It functions in the pathway purine metabolism; IMP biosynthesis via de novo pathway; 5-amino-1-(5-phospho-D-ribosyl)imidazole-4-carboxamide from 5-amino-1-(5-phospho-D-ribosyl)imidazole-4-carboxylate: step 1/2. Bifunctional enzyme involved in de novo IMP synthesis, an essential step for de nove purine synthesis. This Dictyostelium discoideum (Social amoeba) protein is Bifunctional purine synthesis protein purC/E (purC/E).